The primary structure comprises 486 residues: Ribulose bisphosphate carboxylase large chain 1 (486 aa).

Substrate is bound by residues Asn125 and Thr175. Lys177 (proton acceptor) is an active-site residue. A substrate-binding site is contributed by Lys179. Residues Lys203, Asp205, and Glu206 each coordinate Mg(2+). The residue at position 203 (Lys203) is an N6-carboxylysine. His295 (proton acceptor) is an active-site residue. Residues Arg296, His328, and Ser380 each coordinate substrate.

It belongs to the RuBisCO large chain family. Type I subfamily. Heterohexadecamer of 8 large chains and 8 small chains. Mg(2+) serves as cofactor.

The catalysed reaction is 2 (2R)-3-phosphoglycerate + 2 H(+) = D-ribulose 1,5-bisphosphate + CO2 + H2O. The enzyme catalyses D-ribulose 1,5-bisphosphate + O2 = 2-phosphoglycolate + (2R)-3-phosphoglycerate + 2 H(+). In terms of biological role, ruBisCO catalyzes two reactions: the carboxylation of D-ribulose 1,5-bisphosphate, the primary event in carbon dioxide fixation, as well as the oxidative fragmentation of the pentose substrate. Both reactions occur simultaneously and in competition at the same active site. In Bradyrhizobium sp. (strain ORS 278), this protein is Ribulose bisphosphate carboxylase large chain 1.